We begin with the raw amino-acid sequence, 319 residues long: Protein SODIUM POTASSIUM ROOT DEFECTIVE 1 (319 aa).

Polar residues predominate over residues 1 to 13 (MLCASQASTTTLC). 2 disordered regions span residues 1–113 (MLCA…TPQG) and 191–248 (SPDN…NSSS). Low complexity predominate over residues 14–27 (STMDQTSQPSSSSS). The span at 36-49 (AIDRHNPIIRDGRR) shows a compositional bias: basic and acidic residues. Positions 58-67 (LNPSSSSSST) are enriched in low complexity. Polar residues-rich tracts occupy residues 104–113 (SCFSSDTPQG) and 200–210 (TKASPTASLSS). Positions 224–242 (SPPPPPPPSPPQSSPPSPP) are enriched in pro residues. The HMA domain maps to 249 to 315 (DQVVVLRVSL…KVKNAQFWPE (67 aa)). Positions 260 and 263 each coordinate Zn(2+).

As to quaternary structure, interacts with FT, but not with TSF (TWIN SISTER OF FT). Expressed in vascular tissues of cotyledons, rosette leaves and roots in developing seedlings before and during the floral transition. Expressed specifically in the phloem companion cells. Not detected in embryos or seeds. Not detected in the vegetative shoot apex.

It is found in the cytoplasm. It localises to the nucleus. The protein localises to the endoplasmic reticulum. In terms of biological role, required for root meristem maintenance after germination. Involved in phloem translocation, starch accumulation and flowering. Promotes flowering in the photoperiod pathway. Regulates long-distance movement of FT from leaves to the shoot apex through the phloem stream. This Arabidopsis thaliana (Mouse-ear cress) protein is Protein SODIUM POTASSIUM ROOT DEFECTIVE 1.